A 344-amino-acid polypeptide reads, in one-letter code: Heat-inducible transcription repressor HrcA (344 aa).

It belongs to the HrcA family.

Its function is as follows. Negative regulator of class I heat shock genes (grpE-dnaK-dnaJ and groELS operons). Prevents heat-shock induction of these operons. This chain is Heat-inducible transcription repressor HrcA, found in Geobacillus kaustophilus (strain HTA426).